The sequence spans 161 residues: Phosphopantetheine adenylyltransferase (161 aa).

Threonine 11 contacts substrate. Residues threonine 11–phenylalanine 12 and histidine 19 contribute to the ATP site. Residues lysine 43, threonine 75, and arginine 89 each coordinate substrate. Residues glycine 90–arginine 92, glutamate 100, and tyrosine 125–serine 131 each bind ATP.

The protein belongs to the bacterial CoaD family. In terms of assembly, homohexamer. Requires Mg(2+) as cofactor.

The protein resides in the cytoplasm. The enzyme catalyses (R)-4'-phosphopantetheine + ATP + H(+) = 3'-dephospho-CoA + diphosphate. The protein operates within cofactor biosynthesis; coenzyme A biosynthesis; CoA from (R)-pantothenate: step 4/5. In terms of biological role, reversibly transfers an adenylyl group from ATP to 4'-phosphopantetheine, yielding dephospho-CoA (dPCoA) and pyrophosphate. The protein is Phosphopantetheine adenylyltransferase of Listeria innocua serovar 6a (strain ATCC BAA-680 / CLIP 11262).